The chain runs to 251 residues: tRNA (guanine-N(1)-)-methyltransferase (251 aa).

Residues glycine 114 and 134-139 each bind S-adenosyl-L-methionine; that span reads IGDYVL.

This sequence belongs to the RNA methyltransferase TrmD family. As to quaternary structure, homodimer.

The protein localises to the cytoplasm. The catalysed reaction is guanosine(37) in tRNA + S-adenosyl-L-methionine = N(1)-methylguanosine(37) in tRNA + S-adenosyl-L-homocysteine + H(+). In terms of biological role, specifically methylates guanosine-37 in various tRNAs. This Pelotomaculum thermopropionicum (strain DSM 13744 / JCM 10971 / SI) protein is tRNA (guanine-N(1)-)-methyltransferase.